We begin with the raw amino-acid sequence, 223 residues long: N-acetylmuramate alpha-1-phosphate uridylyltransferase (223 aa).

UTP is bound by residues 11 to 13 (GER) and Lys23. Asn105 contributes to the substrate binding site. Asp107 provides a ligand contact to Mg(2+). Substrate-binding residues include Asp140 and Asp205. Asp205 contacts Mg(2+).

It belongs to the nucleotidyltransferase MurU family. As to quaternary structure, monomer. Mg(2+) is required as a cofactor.

It carries out the reaction N-acetyl-alpha-D-muramate 1-phosphate + UDP + H(+) = UDP-N-acetyl-alpha-D-muramate + phosphate. It participates in cell wall biogenesis; peptidoglycan recycling. Its activity is regulated as follows. Is completely inhibited by EDTA in vitro. Catalyzes the formation of UDP-N-acetylmuramate (UDP-MurNAc), a crucial precursor of the bacterial peptidoglycan cell wall, from UTP and MurNAc-alpha-1P. Is involved in peptidoglycan recycling as part of a cell wall recycling pathway that bypasses de novo biosynthesis of the peptidoglycan precursor UDP-MurNAc. Plays a role in intrinsic resistance to fosfomycin, which targets the de novo synthesis of UDP-MurNAc. Is not able to use GlcNAc-alpha-1P and GalNAc-alpha-1P as substrates. Cannot accept other nucleotide triphosphates (ATP, CTP, TTP, or GTP) than UTP. This is N-acetylmuramate alpha-1-phosphate uridylyltransferase from Pseudomonas putida (strain ATCC 47054 / DSM 6125 / CFBP 8728 / NCIMB 11950 / KT2440).